The primary structure comprises 55 residues: Large ribosomal subunit protein bL33 (55 aa).

The segment covering 1 to 11 has biased composition (basic and acidic residues); sequence MAKSGRDKIKL. The segment at 1 to 28 is disordered; sequence MAKSGRDKIKLESTAGTGHFYTTTKNKR. The span at 14-24 shows a compositional bias: polar residues; that stretch reads TAGTGHFYTTT.

This sequence belongs to the bacterial ribosomal protein bL33 family.

The protein is Large ribosomal subunit protein bL33 of Janthinobacterium sp. (strain Marseille) (Minibacterium massiliensis).